Reading from the N-terminus, the 238-residue chain is 2-C-methyl-D-erythritol 4-phosphate cytidylyltransferase (238 aa).

This sequence belongs to the IspD/TarI cytidylyltransferase family. IspD subfamily.

It carries out the reaction 2-C-methyl-D-erythritol 4-phosphate + CTP + H(+) = 4-CDP-2-C-methyl-D-erythritol + diphosphate. It participates in isoprenoid biosynthesis; isopentenyl diphosphate biosynthesis via DXP pathway; isopentenyl diphosphate from 1-deoxy-D-xylulose 5-phosphate: step 2/6. Functionally, catalyzes the formation of 4-diphosphocytidyl-2-C-methyl-D-erythritol from CTP and 2-C-methyl-D-erythritol 4-phosphate (MEP). In Aliivibrio fischeri (strain MJ11) (Vibrio fischeri), this protein is 2-C-methyl-D-erythritol 4-phosphate cytidylyltransferase.